The chain runs to 180 residues: Crossover junction endodeoxyribonuclease RuvC (180 aa).

Catalysis depends on residues aspartate 7, glutamate 66, and aspartate 138. Positions 7, 66, and 138 each coordinate Mg(2+).

The protein belongs to the RuvC family. In terms of assembly, homodimer which binds Holliday junction (HJ) DNA. The HJ becomes 2-fold symmetrical on binding to RuvC with unstacked arms; it has a different conformation from HJ DNA in complex with RuvA. In the full resolvosome a probable DNA-RuvA(4)-RuvB(12)-RuvC(2) complex forms which resolves the HJ. Mg(2+) serves as cofactor.

The protein localises to the cytoplasm. It carries out the reaction Endonucleolytic cleavage at a junction such as a reciprocal single-stranded crossover between two homologous DNA duplexes (Holliday junction).. Its function is as follows. The RuvA-RuvB-RuvC complex processes Holliday junction (HJ) DNA during genetic recombination and DNA repair. Endonuclease that resolves HJ intermediates. Cleaves cruciform DNA by making single-stranded nicks across the HJ at symmetrical positions within the homologous arms, yielding a 5'-phosphate and a 3'-hydroxyl group; requires a central core of homology in the junction. The consensus cleavage sequence is 5'-(A/T)TT(C/G)-3'. Cleavage occurs on the 3'-side of the TT dinucleotide at the point of strand exchange. HJ branch migration catalyzed by RuvA-RuvB allows RuvC to scan DNA until it finds its consensus sequence, where it cleaves and resolves the cruciform DNA. The sequence is that of Crossover junction endodeoxyribonuclease RuvC from Burkholderia orbicola (strain MC0-3).